The chain runs to 86 residues: Neurotoxin homolog NL1 (86 aa).

The N-terminal stretch at 1–21 is a signal peptide; sequence MKTLLLTLVVVTMVCMDLGYT. 4 cysteine pairs are disulfide-bonded: C24/C45, C38/C62, C66/C78, and C79/C84.

This sequence belongs to the three-finger toxin family. Short-chain subfamily. Orphan group VIII (haditoxin) sub-subfamily. As to quaternary structure, homodimer; non-covalently linked. Expressed by the venom gland.

It is found in the secreted. Functionally, antagonist of muscle and neuronal nicotinic acetylcholine receptors (nAChR) with highest affinity for neuronal alpha-7/CHRNA7 nAChRs. The chain is Neurotoxin homolog NL1 from Naja atra (Chinese cobra).